Here is a 369-residue protein sequence, read N- to C-terminus: F-box protein UCC1 (369 aa).

Residues 8-45 (LMDLPLEIHLSLLEYVPNELRAVNKYFYVLHNHSYKEK) enclose the F-box domain.

In terms of assembly, component of the SCF(UCC1) E3 ubiquitin-protein ligase complex composed of CDC53, SKP1, RBX1 and UCC1. Interacts with CIT2. In terms of processing, monoubiquitinated by UBC4.

It participates in protein modification; protein ubiquitination. Its function is as follows. Substrate recognition component of the SKP1-CUL1-F-box protein E3 ubiquitin-protein ligase complex SCF(UCC1) which mediates the ubiquitination and subsequent proteasomal degradation of target proteins. The SCF(UCC1) complex acts as a metabolic switch for the glyoxylate cycle and regulates the level of CIT2 protein to maintain citrate homeostasis. In Saccharomyces cerevisiae (strain ATCC 204508 / S288c) (Baker's yeast), this protein is F-box protein UCC1 (UCC1).